Consider the following 418-residue polypeptide: tRNA(Met) cytidine acetate ligase (418 aa).

ATP contacts are provided by G95, N161, and R186.

Belongs to the TmcAL family.

It localises to the cytoplasm. It catalyses the reaction cytidine(34) in elongator tRNA(Met) + acetate + ATP = N(4)-acetylcytidine(34) in elongator tRNA(Met) + AMP + diphosphate. Its function is as follows. Catalyzes the formation of N(4)-acetylcytidine (ac(4)C) at the wobble position of elongator tRNA(Met), using acetate and ATP as substrates. First activates an acetate ion to form acetyladenylate (Ac-AMP) and then transfers the acetyl group to tRNA to form ac(4)C34. The protein is tRNA(Met) cytidine acetate ligase of Thermotoga petrophila (strain ATCC BAA-488 / DSM 13995 / JCM 10881 / RKU-1).